Consider the following 311-residue polypeptide: Protoheme IX farnesyltransferase (311 aa).

8 consecutive transmembrane segments (helical) span residues 19–39 (VLAY…VATI), 55–75 (ILAT…LNCV), 101–121 (NAFV…WWQA), 123–143 (LLSG…YTLG), 169–189 (AVTG…FFWT), 221–241 (VTKQ…ALVP), 242–262 (ATGV…LLMA), and 290–310 (VVFC…GSFF).

This sequence belongs to the UbiA prenyltransferase family. Protoheme IX farnesyltransferase subfamily.

The protein localises to the cell membrane. It catalyses the reaction heme b + (2E,6E)-farnesyl diphosphate + H2O = Fe(II)-heme o + diphosphate. It functions in the pathway porphyrin-containing compound metabolism; heme O biosynthesis; heme O from protoheme: step 1/1. In terms of biological role, converts heme B (protoheme IX) to heme O by substitution of the vinyl group on carbon 2 of heme B porphyrin ring with a hydroxyethyl farnesyl side group. The protein is Protoheme IX farnesyltransferase of Nocardia farcinica (strain IFM 10152).